The sequence spans 119 residues: NADH dehydrogenase [ubiquinone] 1 subunit C2 (119 aa).

The chain crosses the membrane as a helical span at residues 56-75 (GLHRQLLYITAFFFAGYYLV).

It belongs to the complex I NDUFC2 subunit family. Complex I is composed of 45 different subunits. Interacts with TMEM242.

It localises to the mitochondrion inner membrane. Functionally, accessory subunit of the mitochondrial membrane respiratory chain NADH dehydrogenase (Complex I), that is believed not to be involved in catalysis but required for the complex assembly. Complex I functions in the transfer of electrons from NADH to the respiratory chain. The immediate electron acceptor for the enzyme is believed to be ubiquinone. The chain is NADH dehydrogenase [ubiquinone] 1 subunit C2 from Gorilla gorilla gorilla (Western lowland gorilla).